The chain runs to 612 residues: Coagulation factor X-activating enzyme heavy chain (612 aa).

The N-terminal stretch at 1–20 is a signal peptide; the sequence is MMQVLLVTISLAVFPYQGSS. Residues 21 to 193 constitute a propeptide, or 194; sequence IILESGNVND…KKASQLVATS (173 aa). The Peptidase M12B domain maps to 201 to 395; the sequence is TFIELVIVVD…YKPKCILNPP (195 aa). Glutamate 204 provides a ligand contact to Ca(2+). An N-linked (GlcNAc...) asparagine glycan is attached at asparagine 259. A Ca(2+)-binding site is contributed by aspartate 286. 3 disulfides stabilise this stretch: cysteine 310/cysteine 390, cysteine 350/cysteine 374, and cysteine 352/cysteine 357. Zn(2+) is bound at residue histidine 335. Residue glutamate 336 is part of the active site. Residues histidine 339 and histidine 345 each coordinate Zn(2+). 2 N-linked (GlcNAc...) asparagine glycosylation sites follow: asparagine 353 and asparagine 373. Residues cysteine 390, asparagine 393, isoleucine 405, asparagine 408, glutamate 412, glutamate 415, and aspartate 418 each contribute to the Ca(2+) site. A Disintegrin domain is found at 403–489; it reads PPICGNEIWE…ECPADGFHAN (87 aa). Cysteines 461 and 481 form a disulfide. The short motif at 467-469 is the D/ECD-tripeptide element; the sequence is ECD.

This sequence belongs to the venom metalloproteinase (M12B) family. P-III subfamily. P-IIId sub-subfamily. As to quaternary structure, heterotrimer; disulfide-linked. The heterotrimer consists of 1 heavy chain and 2 light chains (lectins): LC1 and LC2 (AC Q7T045 and AC Q696W1). Requires Zn(2+) as cofactor. N-glycosylated. Contains 8.0% of hexoses, 2.5% of hexosamines and 2.5% of sialic acids. Expressed by the venom gland.

It localises to the secreted. The catalysed reaction is Specifically activates several components of the blood clotting system, including coagulation factor X, coagulation factor IX and protein C by cleavage of Arg-|-Xaa bonds. Has no action on insulin B chain.. With respect to regulation, calcium is required for the activity of the heterotrimer. Catalytic subunit of blood coagulation factor X-activating enzyme. Activates coagulation factor X (F10) by cleaving the Arg(234)-Ile(235) bond, activates coagulation factor IX (F9) by cleaving the Arg(226)-Val(227) bond and is also able to activate protein C (PROC). The chain is Coagulation factor X-activating enzyme heavy chain from Macrovipera lebetinus (Levantine viper).